Consider the following 464-residue polypeptide: Serine carboxypeptidase-like 22 (464 aa).

The signal sequence occupies residues 1–22 (MARTHLLFLLFVLLSLATSSTS). Residues Asn-52, Asn-113, and Asn-137 are each glycosylated (N-linked (GlcNAc...) asparagine). 3 cysteine pairs are disulfide-bonded: Cys-86–Cys-346, Cys-247–Cys-258, and Cys-282–Cys-314. The active site involves Ser-179. N-linked (GlcNAc...) asparagine glycosylation is found at Asn-290 and Asn-335. Catalysis depends on residues Asp-385 and His-437.

Belongs to the peptidase S10 family. As to expression, expression not detected.

It is found in the secreted. Its function is as follows. Probable carboxypeptidase. This chain is Serine carboxypeptidase-like 22 (SCPL22), found in Arabidopsis thaliana (Mouse-ear cress).